A 227-amino-acid chain; its full sequence is Cytochrome c oxidase subunit 2 (227 aa).

Residues 1 to 14 (MAHAAQVGLQDATS) lie on the Mitochondrial intermembrane side of the membrane. A helical transmembrane segment spans residues 15-45 (PIMEELIIFHDHALMIIFLICFLVLYALFLT). Residues 46-59 (LTTKLTNTSISDAQ) lie on the Mitochondrial matrix side of the membrane. The chain crosses the membrane as a helical span at residues 60–87 (EMETVWTILPAIILVLIALPSLRILYMT). The Mitochondrial intermembrane portion of the chain corresponds to 88–227 (DEVNDPSFTI…IFEMGPVFTL (140 aa)). Cu cation contacts are provided by His-161, Cys-196, Glu-198, Cys-200, His-204, and Met-207. Glu-198 is a Mg(2+) binding site.

It belongs to the cytochrome c oxidase subunit 2 family. Component of the cytochrome c oxidase (complex IV, CIV), a multisubunit enzyme composed of 14 subunits. The complex is composed of a catalytic core of 3 subunits MT-CO1, MT-CO2 and MT-CO3, encoded in the mitochondrial DNA, and 11 supernumerary subunits COX4I, COX5A, COX5B, COX6A, COX6B, COX6C, COX7A, COX7B, COX7C, COX8 and NDUFA4, which are encoded in the nuclear genome. The complex exists as a monomer or a dimer and forms supercomplexes (SCs) in the inner mitochondrial membrane with NADH-ubiquinone oxidoreductase (complex I, CI) and ubiquinol-cytochrome c oxidoreductase (cytochrome b-c1 complex, complex III, CIII), resulting in different assemblies (supercomplex SCI(1)III(2)IV(1) and megacomplex MCI(2)III(2)IV(2)). Found in a complex with TMEM177, COA6, COX18, COX20, SCO1 and SCO2. Interacts with TMEM177 in a COX20-dependent manner. Interacts with COX20. Interacts with COX16. Cu cation is required as a cofactor.

The protein localises to the mitochondrion inner membrane. The catalysed reaction is 4 Fe(II)-[cytochrome c] + O2 + 8 H(+)(in) = 4 Fe(III)-[cytochrome c] + 2 H2O + 4 H(+)(out). In terms of biological role, component of the cytochrome c oxidase, the last enzyme in the mitochondrial electron transport chain which drives oxidative phosphorylation. The respiratory chain contains 3 multisubunit complexes succinate dehydrogenase (complex II, CII), ubiquinol-cytochrome c oxidoreductase (cytochrome b-c1 complex, complex III, CIII) and cytochrome c oxidase (complex IV, CIV), that cooperate to transfer electrons derived from NADH and succinate to molecular oxygen, creating an electrochemical gradient over the inner membrane that drives transmembrane transport and the ATP synthase. Cytochrome c oxidase is the component of the respiratory chain that catalyzes the reduction of oxygen to water. Electrons originating from reduced cytochrome c in the intermembrane space (IMS) are transferred via the dinuclear copper A center (CU(A)) of subunit 2 and heme A of subunit 1 to the active site in subunit 1, a binuclear center (BNC) formed by heme A3 and copper B (CU(B)). The BNC reduces molecular oxygen to 2 water molecules using 4 electrons from cytochrome c in the IMS and 4 protons from the mitochondrial matrix. This chain is Cytochrome c oxidase subunit 2 (MT-CO2), found in Pan troglodytes (Chimpanzee).